The chain runs to 458 residues: Cell death abnormality protein 8 (458 aa).

The Cytoplasmic segment spans residues 1–45; the sequence is MFLKKHKSKLLLVPRDEEQEDAGIVAVLTDRIPSVLLVRWFDLFC. The chain crosses the membrane as a helical span at residues 46-66; sequence FGFAMCSYALDFFSDIGIAIF. Residues 67–77 lie on the Extracellular side of the membrane; the sequence is HFWAGRYLSGS. The helical transmembrane segment at 78 to 98 threads the bilayer; it reads LVLAFALLPSVIINIISMVWM. Residues 99–123 are Cytoplasmic-facing; that stretch reads LDDEMHWKRRAHPRRTGTFELNQKR. Residues 124–144 traverse the membrane as a helical segment; the sequence is FIPLSKMIVLCICQMGPLFWY. Topologically, residues 145–219 are extracellular; sequence YKALYYGWMF…YYQTGTYPYW (75 aa). Residues 220-240 traverse the membrane as a helical segment; the sequence is LYFQAASLLLSIISISWSVVV. At 241 to 274 the chain is on the cytoplasmic side; sequence QNRSLRMIRDDKVNIWPHEAVLQFCWRFLTILAR. 2 consecutive transmembrane segments (helical) span residues 275-295 and 296-316; these read IITL…LISV and HLLV…DACT. Position 317 (His-317) is a topological domain, extracellular. The chain crosses the membrane as a helical span at residues 318–338; sequence IEKLLLLINTFIHIFIPFNMV. The Cytoplasmic portion of the chain corresponds to 339 to 353; that stretch reads EGNTRWRYLTAYSVE. The helical transmembrane segment at 354–374 threads the bilayer; the sequence is FIEMMLVCWLLPLSLNTFPYI. At 375 to 378 the chain is on the extracellular side; the sequence is EKVQ. A helical membrane pass occupies residues 379 to 399; that stretch reads VGVPISFIAGIAIMMMYYQFF. Residues 400-458 are Cytoplasmic-facing; that stretch reads HPNRRQLIVTQSQEDLSLNVQKSVETLTPKLESSLEISGEQNTSQDLVSELLLDVEHEN.

It belongs to the XK family. Cleavage by ced-3 activates ced-8 function in promoting phosphatidylserine exposure at the surface of apoptotic cells.

Its subcellular location is the cell membrane. The catalysed reaction is a 1,2-diacyl-sn-glycero-3-phospho-L-serine(in) = a 1,2-diacyl-sn-glycero-3-phospho-L-serine(out). Functionally, phospholipid scramblase that acts downstream of ced-9 and caspase ced-3 to promote phosphatidylserine exposure on apoptotic cell surface. Phosphatidylserine is a specific marker only present at the surface of apoptotic cells and acts as a specific signal for engulfment. Regulates apoptosis kinetics during embryonic development. Not required for engulfment of germ cell corpses. The protein is Cell death abnormality protein 8 of Caenorhabditis elegans.